We begin with the raw amino-acid sequence, 96 residues long: MKIRPLNDKLIVERQEVENKSEGGIVLTSQSVKKSNRGKVIAVGLGKRFENGERAAMEVKVGDQIIFNDGYGVKTEKIDGAEYLILSESDVLAIVE.

This sequence belongs to the GroES chaperonin family. As to quaternary structure, heptamer of 7 subunits arranged in a ring. Interacts with the chaperonin GroEL.

The protein resides in the cytoplasm. Functionally, together with the chaperonin GroEL, plays an essential role in assisting protein folding. The GroEL-GroES system forms a nano-cage that allows encapsulation of the non-native substrate proteins and provides a physical environment optimized to promote and accelerate protein folding. GroES binds to the apical surface of the GroEL ring, thereby capping the opening of the GroEL channel. The chain is Co-chaperonin GroES 2 from Vibrio parahaemolyticus serotype O3:K6 (strain RIMD 2210633).